Consider the following 411-residue polypeptide: Peptidase T (411 aa).

Zn(2+) is bound at residue His79. The active site involves Asp81. Asp142 is a binding site for Zn(2+). The Proton acceptor role is filled by Glu176. Zn(2+) is bound by residues Glu177, Asp199, and His381.

Belongs to the peptidase M20B family. It depends on Zn(2+) as a cofactor.

The protein localises to the cytoplasm. The catalysed reaction is Release of the N-terminal residue from a tripeptide.. Its function is as follows. Cleaves the N-terminal amino acid of tripeptides. The protein is Peptidase T of Geobacillus kaustophilus (strain HTA426).